The chain runs to 145 residues: Putative antiporter subunit mnhG2 (145 aa).

Helical transmembrane passes span 11 to 31, 51 to 71, and 72 to 92; these read IAAVMLLLGSFIALISAIGIV, VLLTLIGVLIYFIVNTGFFSV, and RLLLSLVFINLTSPVGMHLVA.

It belongs to the CPA3 antiporters (TC 2.A.63) subunit G family. In terms of assembly, may form a heterooligomeric complex that consists of seven subunits: mnhA2, mnhB2, mnhC2, mnhD2, mnhE2, mnhF2 and mnhG2.

The protein localises to the cell membrane. In Staphylococcus aureus (strain MRSA252), this protein is Putative antiporter subunit mnhG2 (mnhG2).